We begin with the raw amino-acid sequence, 416 residues long: Argininosuccinate synthase (416 aa).

ATP contacts are provided by residues 11–19 (AYSGGLDTS) and A37. An L-citrulline-binding site is contributed by Y88. Phosphotyrosine occurs at positions 88 and 114. Residue 116–124 (AHGATGKGN) coordinates ATP. L-aspartate-binding residues include T120, N124, and D125. N124 provides a ligand contact to L-citrulline. Residues R128, S181, S190, E271, and Y283 each coordinate L-citrulline. Residue S181 is modified to Phosphoserine.

The protein belongs to the argininosuccinate synthase family. In terms of assembly, homotetramer.

The protein localises to the cytoplasm. Its subcellular location is the cytosol. It carries out the reaction L-citrulline + L-aspartate + ATP = 2-(N(omega)-L-arginino)succinate + AMP + diphosphate + H(+). It participates in amino-acid biosynthesis; L-arginine biosynthesis; L-arginine from L-ornithine and carbamoyl phosphate: step 2/3. It functions in the pathway nitrogen metabolism; urea cycle; (N(omega)-L-arginino)succinate from L-aspartate and L-citrulline: step 1/1. One of the enzymes of the urea cycle, the metabolic pathway transforming neurotoxic amonia produced by protein catabolism into inocuous urea in the liver of ureotelic animals. Catalyzes the formation of arginosuccinate from aspartate, citrulline and ATP and together with ASL it is responsible for the biosynthesis of arginine in most body tissues. The chain is Argininosuccinate synthase from Gallus gallus (Chicken).